The primary structure comprises 141 residues: uncharacterized protein (141 aa).

Positions 4–139 constitute an HTH marR-type domain; the sequence is RTQMMYDMET…LIELFSKLDK (136 aa). The segment at residues 53–76 is a DNA-binding region (H-T-H motif); it reads VTEFAPILEVSASHITAVTDALVE.

This is an uncharacterized protein from Bacillus subtilis (strain 168).